The primary structure comprises 317 residues: Protein CbxX, chromosomal (317 aa).

The tract at residues 1–21 is disordered; that stretch reads MSAPETTAPLQPPAAPAASLP. 85–92 contacts ATP; it reads GNPGTGKT.

This sequence belongs to the CbxX/CfxQ family.

Its function is as follows. Seems to be necessary for the expression of RuBisCO. The sequence is that of Protein CbxX, chromosomal (cbxXC) from Cupriavidus necator (strain ATCC 17699 / DSM 428 / KCTC 22496 / NCIMB 10442 / H16 / Stanier 337) (Ralstonia eutropha).